Here is an 83-residue protein sequence, read N- to C-terminus: Toxin Aam1 (83 aa).

A signal peptide spans Met1–Ser19. The 62-residue stretch at Arg21–Tyr82 folds into the LCN-type CS-alpha/beta domain. 4 disulfides stabilise this stretch: Cys31/Cys81, Cys35/Cys53, Cys39/Cys63, and Cys43/Cys65.

Belongs to the long (4 C-C) scorpion toxin superfamily. Sodium channel inhibitor family. Alpha subfamily. Post-translationally, the C-terminal basic residue is removed by a carboxypeptidase. In terms of tissue distribution, expressed by the venom gland.

It is found in the secreted. Functionally, alpha toxins bind voltage-independently at site-3 of sodium channels (Nav) and inhibit the inactivation of the activated channels, thereby blocking neuronal transmission. This is Toxin Aam1 (H1) from Androctonus amoreuxi (African fattail scorpion).